The following is a 199-amino-acid chain: V-type ATP synthase subunit E (199 aa).

This sequence belongs to the V-ATPase E subunit family.

Produces ATP from ADP in the presence of a proton gradient across the membrane. The sequence is that of V-type ATP synthase subunit E from Borreliella afzelii (strain PKo) (Borrelia afzelii).